The primary structure comprises 581 residues: Putative aluminum-activated malate transporter 3 (581 aa).

Transmembrane regions (helical) follow at residues Met-98–Leu-118, Tyr-122–Ser-142, Gly-148–Ile-164, Met-167–Ala-187, Tyr-201–Tyr-218, and Phe-231–Ile-251.

It belongs to the aromatic acid exporter (TC 2.A.85) family.

It is found in the membrane. Malate transporter. This is Putative aluminum-activated malate transporter 3 (ALMT3) from Arabidopsis thaliana (Mouse-ear cress).